We begin with the raw amino-acid sequence, 365 residues long: Peptide chain release factor 2 (365 aa).

Gln252 is subject to N5-methylglutamine.

The protein belongs to the prokaryotic/mitochondrial release factor family. Methylated by PrmC. Methylation increases the termination efficiency of RF2.

It localises to the cytoplasm. Peptide chain release factor 2 directs the termination of translation in response to the peptide chain termination codons UGA and UAA. The chain is Peptide chain release factor 2 from Pasteurella multocida (strain Pm70).